A 207-amino-acid chain; its full sequence is LexA repressor (207 aa).

A DNA-binding region (H-T-H motif) is located at residues 28–48; that stretch reads RAEIAQKLGFKSANAAEEHLK. Residues Ser-124 and Lys-161 each act as for autocatalytic cleavage activity in the active site.

This sequence belongs to the peptidase S24 family. Homodimer.

It catalyses the reaction Hydrolysis of Ala-|-Gly bond in repressor LexA.. Functionally, represses a number of genes involved in the response to DNA damage (SOS response), including recA and lexA. In the presence of single-stranded DNA, RecA interacts with LexA causing an autocatalytic cleavage which disrupts the DNA-binding part of LexA, leading to derepression of the SOS regulon and eventually DNA repair. This chain is LexA repressor, found in Aeromonas hydrophila subsp. hydrophila (strain ATCC 7966 / DSM 30187 / BCRC 13018 / CCUG 14551 / JCM 1027 / KCTC 2358 / NCIMB 9240 / NCTC 8049).